Reading from the N-terminus, the 67-residue chain is Ferredoxin FdxE (67 aa).

[3Fe-4S] cluster contacts are provided by Cys10, Val11, Gln15, Cys16, and Cys54.

In terms of assembly, interacts with the cytochrome P450 143 with high affinity (Kd=84 nM). It depends on [3Fe-4S] cluster as a cofactor.

Ferredoxin that is the redox partner of cytochrome CYP143, a cytochrome P450 encoded by an adjacent gene. This chain is Ferredoxin FdxE, found in Mycobacterium tuberculosis (strain ATCC 25618 / H37Rv).